A 221-amino-acid polypeptide reads, in one-letter code: Glycerol metabolism activator (221 aa).

In terms of domain architecture, Response regulatory spans 3–120 (KILIADDHPL…QMTDAIEQIL (118 aa)). Asp55 is modified (4-aspartylphosphate). One can recognise an HTH luxR-type domain in the interval 149–214 (APELLQALTR…QAILSAGDID (66 aa)). The H-T-H motif DNA-binding region spans 173–192 (NKQIAYNLDIAETTVKAHVS).

In terms of biological role, positive activator for glycerol metabolism. Regulates the expression of qedA in a positive manner and governs the expression of ADH I and ADH IIB. General regulator of quinoprotein ethanol oxidation and affects expression of ADH IIG activity but is not the sole regulator. This chain is Glycerol metabolism activator, found in Pseudomonas putida (Arthrobacter siderocapsulatus).